The chain runs to 287 residues: ATP synthase gamma chain (287 aa).

It belongs to the ATPase gamma chain family. As to quaternary structure, F-type ATPases have 2 components, CF(1) - the catalytic core - and CF(0) - the membrane proton channel. CF(1) has five subunits: alpha(3), beta(3), gamma(1), delta(1), epsilon(1). CF(0) has three main subunits: a, b and c.

It localises to the cell inner membrane. Produces ATP from ADP in the presence of a proton gradient across the membrane. The gamma chain is believed to be important in regulating ATPase activity and the flow of protons through the CF(0) complex. This chain is ATP synthase gamma chain, found in Xanthomonas axonopodis pv. citri (strain 306).